Here is an 805-residue protein sequence, read N- to C-terminus: Angiotensin-converting enzyme 2 (805 aa).

A signal peptide spans 1–17 (MSGSSWLLLSLVAVTAA). The Extracellular segment spans residues 18 to 740 (QSTIEEQAKT…LGPPNQPPVS (723 aa)). In terms of domain architecture, Peptidase M2 spans 19–607 (STIEEQAKTF…QNKNSFVGWS (589 aa)). N-linked (GlcNAc...) asparagine glycans are attached at residues N53, N90, and N103. C133 and C141 are oxidised to a cystine. R169 serves as a coordination point for chloride. R273 serves as a coordination point for substrate. N-linked (GlcNAc...) asparagine glycosylation is present at N322. C344 and C361 are disulfide-bonded. 345–346 (HP) is a binding site for substrate. A Zn(2+)-binding site is contributed by H374. E375 (proton acceptor) is an active-site residue. 2 residues coordinate Zn(2+): H378 and E402. A glycan (N-linked (GlcNAc...) asparagine) is linked at N432. Positions 477 and 481 each coordinate chloride. Residue H505 is the Proton donor of the active site. Y515 is a binding site for substrate. C530 and C542 are disulfide-bonded. N546 carries an N-linked (GlcNAc...) asparagine glycan. The Collectrin-like domain maps to 614 to 805 (ADQSIKVRIS…QNTDDVQTSF (192 aa)). The segment at 652–659 (RKYFLEVK) is essential for cleavage by ADAM17. A glycan (N-linked (GlcNAc...) asparagine) is linked at N690. Residues 697-716 (RTEVEKAIRMSRSRINDAFR) form an essential for cleavage by TMPRSS11D and TMPRSS2 region. Residues 741 to 761 (IWLIVFGVVMGVIVVGIVVLI) traverse the membrane as a helical segment. Residues 762 to 805 (FTGIRDRKKKNKARNEENPYASIDISKGENNPGFQNTDDVQTSF) are Cytoplasmic-facing. The interval 772–805 (NKARNEENPYASIDISKGENNPGFQNTDDVQTSF) is disordered. Residues 778–786 (ENPYASIDI) carry the LIR motif. Y781 carries the phosphotyrosine modification. An Endocytic sorting signal motif is present at residues 781-784 (YASI). The short motif at 781 to 785 (YASID) is the SH2-binding element. S783 is subject to Phosphoserine. K788 is covalently cross-linked (Glycyl lysine isopeptide (Lys-Gly) (interchain with G-Cter in ubiquitin)). Over residues 789 to 805 (GENNPGFQNTDDVQTSF) the composition is skewed to polar residues. Positions 792 to 795 (NPGF) match the PTB motif. The PDZ-binding signature appears at 803–805 (TSF).

The protein belongs to the peptidase M2 family. In terms of assembly, homodimer. Interacts with the catalytically active form of TMPRSS2. Interacts with SLC6A19; this interaction is essential for expression and function of SLC6A19 in intestine. Interacts with ITGA5:ITGB1. Probably interacts (via endocytic sorting signal motif) with AP2M1; the interaction is inhibited by phosphorylation of Tyr-781. Interacts (via PDZ-binding motif) with NHERF1 (via PDZ domains); the interaction may enhance ACE2 membrane residence. The cofactor is Zn(2+). Chloride serves as cofactor. In terms of processing, proteolytic cleavage by ADAM17 generates a secreted form. Also cleaved by serine proteases: TMPRSS2, TMPRSS11D and HPN/TMPRSS1. Post-translationally, phosphorylated. Phosphorylation at Tyr-781 probably inhibits interaction with AP2M1 and enables interactions with proteins containing SH2 domains. Ubiquitinated. Ubiquitinated on Lys-788 via 'Lys-48'-linked ubiquitin. 'Lys-48'-linked deubiquitinated by USP50 on the Lys-788; leading to its stabilization.

It is found in the secreted. The protein resides in the cell membrane. It localises to the cytoplasm. Its subcellular location is the cell projection. The protein localises to the cilium. It is found in the apical cell membrane. It carries out the reaction angiotensin II + H2O = angiotensin-(1-7) + L-phenylalanine. The enzyme catalyses angiotensin I + H2O = angiotensin-(1-9) + L-leucine. The catalysed reaction is bradykinin(1-8) + H2O = bradykinin(1-7) + L-phenylalanine. It catalyses the reaction neurotensin + H2O = neurotensin-(1-12) + L-leucine. It carries out the reaction kinetensin + H2O = kinetensin-(1-8) + L-leucine. The enzyme catalyses dynorphin A-(1-13) + H2O = dynorphin A-(1-12) + L-lysine. The catalysed reaction is apelin-13 + H2O = apelin-12 + L-phenylalanine. It catalyses the reaction [Pyr1]apelin-13 + H2O = [Pyr1]apelin-12 + L-phenylalanine. It carries out the reaction apelin-17 + H2O = apelin-16 + L-phenylalanine. Its function is as follows. Essential counter-regulatory carboxypeptidase of the renin-angiotensin hormone system that is a critical regulator of blood volume, systemic vascular resistance, and thus cardiovascular homeostasis. Converts angiotensin I to angiotensin 1-9, a nine-amino acid peptide with anti-hypertrophic effects in cardiomyocytes, and angiotensin II to angiotensin 1-7, which then acts as a beneficial vasodilator and anti-proliferation agent, counterbalancing the actions of the vasoconstrictor angiotensin II. Also removes the C-terminal residue from three other vasoactive peptides, neurotensin, kinetensin, and des-Arg bradykinin, but is not active on bradykinin. Also cleaves other biological peptides, such as apelins, casomorphins and dynorphin A. Plays an important role in amino acid transport by acting as binding partner of amino acid transporter SLC6A19 in intestine, regulating trafficking, expression on the cell surface, and its catalytic activity. The sequence is that of Angiotensin-converting enzyme 2 (ACE2) from Pongo abelii (Sumatran orangutan).